A 262-amino-acid polypeptide reads, in one-letter code: Putative phosphatase HI_0003 (262 aa).

The active-site Nucleophile is the Asp9. Positions 9 and 11 each coordinate Mg(2+). Phosphate-binding positions include Ser43–Ala44 and Lys189. Asp212 contributes to the Mg(2+) binding site. Asn215 serves as a coordination point for phosphate.

This sequence belongs to the HAD-like hydrolase superfamily. Cof family. The cofactor is Mg(2+).

The polypeptide is Putative phosphatase HI_0003 (Haemophilus influenzae (strain ATCC 51907 / DSM 11121 / KW20 / Rd)).